Reading from the N-terminus, the 306-residue chain is tRNA pseudouridine synthase B (306 aa).

The active-site Nucleophile is Asp46.

The protein belongs to the pseudouridine synthase TruB family. Type 1 subfamily.

The catalysed reaction is uridine(55) in tRNA = pseudouridine(55) in tRNA. In terms of biological role, responsible for synthesis of pseudouridine from uracil-55 in the psi GC loop of transfer RNAs. The sequence is that of tRNA pseudouridine synthase B from Gluconacetobacter diazotrophicus (strain ATCC 49037 / DSM 5601 / CCUG 37298 / CIP 103539 / LMG 7603 / PAl5).